Reading from the N-terminus, the 325-residue chain is tRNA N6-adenosine threonylcarbamoyltransferase (325 aa).

Histidine 107, histidine 111, and tyrosine 127 together coordinate Fe cation. Substrate-binding positions include 127-131, aspartate 159, glycine 172, glutamate 176, and asparagine 257; that span reads YVSGG. Aspartate 285 provides a ligand contact to Fe cation.

It belongs to the KAE1 / TsaD family. In terms of assembly, monomer. Component of the KEOPS complex that consists of Kae1, Bud32, Cgi121 and Pcc1; the whole complex dimerizes. It depends on Fe(2+) as a cofactor.

The protein resides in the cytoplasm. It catalyses the reaction L-threonylcarbamoyladenylate + adenosine(37) in tRNA = N(6)-L-threonylcarbamoyladenosine(37) in tRNA + AMP + H(+). Required for the formation of a threonylcarbamoyl group on adenosine at position 37 (t(6)A37) in tRNAs that read codons beginning with adenine. Is a component of the KEOPS complex that is probably involved in the transfer of the threonylcarbamoyl moiety of threonylcarbamoyl-AMP (TC-AMP) to the N6 group of A37. Kae1 likely plays a direct catalytic role in this reaction, but requires other protein(s) of the complex to fulfill this activity. This Thermococcus kodakarensis (strain ATCC BAA-918 / JCM 12380 / KOD1) (Pyrococcus kodakaraensis (strain KOD1)) protein is tRNA N6-adenosine threonylcarbamoyltransferase.